Consider the following 166-residue polypeptide: Large ribosomal subunit protein uL10 (166 aa).

This sequence belongs to the universal ribosomal protein uL10 family. As to quaternary structure, part of the ribosomal stalk of the 50S ribosomal subunit. The N-terminus interacts with L11 and the large rRNA to form the base of the stalk. The C-terminus forms an elongated spine to which L12 dimers bind in a sequential fashion forming a multimeric L10(L12)X complex.

Its function is as follows. Forms part of the ribosomal stalk, playing a central role in the interaction of the ribosome with GTP-bound translation factors. This is Large ribosomal subunit protein uL10 from Pseudomonas entomophila (strain L48).